We begin with the raw amino-acid sequence, 240 residues long: MPTLGVNIDHVATIRQARRTVEPDPVAAAVLAELAGADGITVHLREDRRHIQDRDVEVLRKTVRTHLNLEMAATAEMVEIALRIQPDYVTLVPEKREEVTTEGGLDVIGQQTHMADVVQTLQAANIPVSLFIDADAAQIEAAAQVQAKFIELHTGTYAEAKGEAQQTQELDVLKQGCDRAAALGLRVNAGHGLTYWNTYPVACLPGMEELNIGHTIISRSVLVGLERAVREMKDVIAGRG.

Residue Asn-7 participates in 3-amino-2-oxopropyl phosphate binding. Position 9 to 10 (9 to 10 (DH)) interacts with 1-deoxy-D-xylulose 5-phosphate. Arg-18 is a binding site for 3-amino-2-oxopropyl phosphate. His-43 (proton acceptor) is an active-site residue. 2 residues coordinate 1-deoxy-D-xylulose 5-phosphate: Arg-45 and His-50. The Proton acceptor role is filled by Glu-70. Thr-100 contacts 1-deoxy-D-xylulose 5-phosphate. Catalysis depends on His-191, which acts as the Proton donor. Residues Gly-192 and 213–214 (GH) each bind 3-amino-2-oxopropyl phosphate.

This sequence belongs to the PNP synthase family. Homooctamer; tetramer of dimers.

The protein resides in the cytoplasm. It carries out the reaction 3-amino-2-oxopropyl phosphate + 1-deoxy-D-xylulose 5-phosphate = pyridoxine 5'-phosphate + phosphate + 2 H2O + H(+). Its pathway is cofactor biosynthesis; pyridoxine 5'-phosphate biosynthesis; pyridoxine 5'-phosphate from D-erythrose 4-phosphate: step 5/5. Its function is as follows. Catalyzes the complicated ring closure reaction between the two acyclic compounds 1-deoxy-D-xylulose-5-phosphate (DXP) and 3-amino-2-oxopropyl phosphate (1-amino-acetone-3-phosphate or AAP) to form pyridoxine 5'-phosphate (PNP) and inorganic phosphate. The sequence is that of Pyridoxine 5'-phosphate synthase from Acaryochloris marina (strain MBIC 11017).